The primary structure comprises 299 residues: Ribonuclease H2 subunit A (299 aa).

N-acetylmethionine is present on Met-1. The RNase H type-2 domain maps to 28 to 250 (PCVLGVDEAG…AQTILEKEAE (223 aa)). A divalent metal cation contacts are provided by Asp-34, Glu-35, and Asp-141. Thr-204 and Thr-216 each carry phosphothreonine. Residues Ser-257 and Ser-277 each carry the phosphoserine modification.

This sequence belongs to the RNase HII family. Eukaryotic subfamily. The RNase H2 complex is a heterotrimer composed of the catalytic subunit RNASEH2A and the non-catalytic subunits RNASEH2B and RNASEH2C. Mn(2+) serves as cofactor. It depends on Mg(2+) as a cofactor.

The protein resides in the nucleus. It carries out the reaction Endonucleolytic cleavage to 5'-phosphomonoester.. Its function is as follows. Catalytic subunit of RNase HII, an endonuclease that specifically degrades the RNA of RNA:DNA hybrids. Participates in DNA replication, possibly by mediating the removal of lagging-strand Okazaki fragment RNA primers during DNA replication. Mediates the excision of single ribonucleotides from DNA:RNA duplexes. The sequence is that of Ribonuclease H2 subunit A (RNASEH2A) from Homo sapiens (Human).